The sequence spans 284 residues: GPN-loop GTPase 3 (284 aa).

Position 13–18 (13–18 (GSGKST)) interacts with GTP. The short motif at 72–74 (GPN) is the Gly-Pro-Asn (GPN)-loop; involved in dimer interface element. 174-177 (TKMD) serves as a coordination point for GTP. Residues 261–284 (KEPKEHEEESSSMFDEYFQERQNE) are disordered.

The protein belongs to the GPN-loop GTPase family. In terms of assembly, heterodimer with GPN1. Binds to RNA polymerase II (RNAPII). Interacts directly with subunits RPB4 and RPB7 and the CTD of RPB1.

In terms of biological role, small GTPase required for proper localization of RNA polymerase II (RNAPII). May act at an RNAP assembly step prior to nuclear import. This Rattus norvegicus (Rat) protein is GPN-loop GTPase 3.